A 353-amino-acid chain; its full sequence is UPF0283 membrane protein CKO_01392 (353 aa).

Transmembrane regions (helical) follow at residues 70 to 90, 99 to 119, and 213 to 233; these read MVMGGLALFGVSVVGQGVQWT, WVALGGCAAGALIIGAGVGSV, and ESTLMIAVSPLALVDMAFIAW.

This sequence belongs to the UPF0283 family.

Its subcellular location is the cell inner membrane. The sequence is that of UPF0283 membrane protein CKO_01392 from Citrobacter koseri (strain ATCC BAA-895 / CDC 4225-83 / SGSC4696).